We begin with the raw amino-acid sequence, 917 residues long: Catenin alpha (917 aa).

Thr643 and Thr645 each carry phosphothreonine. Residues Ser659 and Ser662 each carry the phosphoserine modification. Over residues 878–890 (PLVRPEKPEEVRA) the composition is skewed to basic and acidic residues. The disordered stretch occupies residues 878-905 (PLVRPEKPEEVRAKVRKGSQKKVQNPIH).

Belongs to the vinculin/alpha-catenin family. Interacts with arm/armadillo protein. Post-translationally, rapidly phosphorylated by CK2 and more slowly by CK1.

The protein localises to the cytoplasm. It is found in the cytoskeleton. Its subcellular location is the cell junction. The protein resides in the adherens junction. It localises to the cell membrane. Functionally, associates with the cytoplasmic domain of a variety of cadherins. The association of catenins to cadherins produces a complex which is linked to the actin filament network, and which seems to be of primary importance for cadherins cell-adhesion properties. This chain is Catenin alpha, found in Drosophila melanogaster (Fruit fly).